A 1029-amino-acid polypeptide reads, in one-letter code: Serine/threonine-protein kinase KSP1 (1029 aa).

A Protein kinase domain is found at 18–351; the sequence is YQKIEDISEG…TELQNLSEYT (334 aa). ATP is bound by residues 27–35 and Lys47; that span reads GSYGYVSLA. A compositionally biased stretch (acidic residues) spans 56–79; it reads GQYDGPQDDENDCDSSDCDDDEDT. Residues 56-105 form a disordered region; sequence GQYDGPQDDENDCDSSDCDDDEDTKVDTDRHENENGNASSNNGSSREKKH. The segment covering 80–89 has biased composition (basic and acidic residues); that stretch reads KVDTDRHENE. Low complexity predominate over residues 90–99; it reads NGNASSNNGS. Asp207 serves as the catalytic Proton acceptor. A disordered region spans residues 377–397; that stretch reads VPPSSAPVSLPTPISSSNKQH. A phosphoserine mark is found at Ser416 and Ser419. Thr501, Thr504, and Thr526 each carry phosphothreonine. A Phosphoserine modification is found at Ser529. The tract at residues 532 to 570 is disordered; the sequence is HRYMEGFSNNNNKQYRQNRNYNNNNNNSNNNHGSNYNNF. Residues 538 to 570 show a composition bias toward low complexity; that stretch reads FSNNNNKQYRQNRNYNNNNNNSNNNHGSNYNNF. Residue Ser646 is modified to Phosphoserine. The tract at residues 732-824 is disordered; sequence STNHNNNGNN…SDSKELEQER (93 aa). Positions 734-743 are enriched in low complexity; that stretch reads NHNNNGNNNH. The span at 744-754 shows a compositional bias: polar residues; the sequence is IDTNSTTNQYH. The span at 813-824 shows a compositional bias: basic and acidic residues; it reads HSSDSKELEQER. Phosphoserine is present on residues Ser845 and Ser884. Positions 949–978 are disordered; that stretch reads EYEGESDKMAHGKMEGGDNESSSTSPDERQ. The segment covering 953–964 has biased composition (basic and acidic residues); that stretch reads ESDKMAHGKMEG. Thr1005 carries the phosphothreonine modification. Ser1014 carries the post-translational modification Phosphoserine.

This sequence belongs to the protein kinase superfamily. Ser/Thr protein kinase family. CK2 subfamily. In terms of processing, phosphorylated by PKA in a TORC1-dependent manner. Phosphorylation at PKA consensus sites RRxS/T decreases upon rapamycin treatment.

The protein resides in the nucleus. It carries out the reaction L-seryl-[protein] + ATP = O-phospho-L-seryl-[protein] + ADP + H(+). The enzyme catalyses L-threonyl-[protein] + ATP = O-phospho-L-threonyl-[protein] + ADP + H(+). May act on PRP20. This chain is Serine/threonine-protein kinase KSP1 (KSP1), found in Saccharomyces cerevisiae (strain ATCC 204508 / S288c) (Baker's yeast).